Consider the following 338-residue polypeptide: Ketol-acid reductoisomerase (NADP(+)) (338 aa).

One can recognise a KARI N-terminal Rossmann domain in the interval 1–181 (MQVYYDKDCD…GGGRTGIIET (181 aa)). NADP(+) contacts are provided by residues 24-27 (FGSQ), Arg-47, Ser-50, Ser-52, and 82-85 (DEFQ). His-107 is an active-site residue. Gly-133 contributes to the NADP(+) binding site. The region spanning 182–327 (TFKDETETDL…EKLRSMMPWI (146 aa)) is the KARI C-terminal knotted domain. Mg(2+) contacts are provided by Asp-190, Glu-194, Glu-226, and Glu-230. Residue Ser-251 coordinates substrate.

This sequence belongs to the ketol-acid reductoisomerase family. It depends on Mg(2+) as a cofactor.

The enzyme catalyses (2R)-2,3-dihydroxy-3-methylbutanoate + NADP(+) = (2S)-2-acetolactate + NADPH + H(+). It catalyses the reaction (2R,3R)-2,3-dihydroxy-3-methylpentanoate + NADP(+) = (S)-2-ethyl-2-hydroxy-3-oxobutanoate + NADPH + H(+). Its pathway is amino-acid biosynthesis; L-isoleucine biosynthesis; L-isoleucine from 2-oxobutanoate: step 2/4. It participates in amino-acid biosynthesis; L-valine biosynthesis; L-valine from pyruvate: step 2/4. Its function is as follows. Involved in the biosynthesis of branched-chain amino acids (BCAA). Catalyzes an alkyl-migration followed by a ketol-acid reduction of (S)-2-acetolactate (S2AL) to yield (R)-2,3-dihydroxy-isovalerate. In the isomerase reaction, S2AL is rearranged via a Mg-dependent methyl migration to produce 3-hydroxy-3-methyl-2-ketobutyrate (HMKB). In the reductase reaction, this 2-ketoacid undergoes a metal-dependent reduction by NADPH to yield (R)-2,3-dihydroxy-isovalerate. The chain is Ketol-acid reductoisomerase (NADP(+)) from Marinobacter nauticus (strain ATCC 700491 / DSM 11845 / VT8) (Marinobacter aquaeolei).